A 224-amino-acid polypeptide reads, in one-letter code: Cytidylate kinase (224 aa).

11-19 provides a ligand contact to ATP; it reads GPAAAGKST.

It belongs to the cytidylate kinase family. Type 1 subfamily.

Its subcellular location is the cytoplasm. The enzyme catalyses CMP + ATP = CDP + ADP. It catalyses the reaction dCMP + ATP = dCDP + ADP. This is Cytidylate kinase from Geobacillus sp. (strain WCH70).